The chain runs to 429 residues: Glutamyl-tRNA reductase (429 aa).

Substrate contacts are provided by residues 56–59 (TCNR), serine 119, 124–126 (EPQ), and glutamine 130. The active-site Nucleophile is the cysteine 57. 199–204 (GAGEMI) contacts NADP(+).

It belongs to the glutamyl-tRNA reductase family. Homodimer.

It carries out the reaction (S)-4-amino-5-oxopentanoate + tRNA(Glu) + NADP(+) = L-glutamyl-tRNA(Glu) + NADPH + H(+). It participates in porphyrin-containing compound metabolism; protoporphyrin-IX biosynthesis; 5-aminolevulinate from L-glutamyl-tRNA(Glu): step 1/2. In terms of biological role, catalyzes the NADPH-dependent reduction of glutamyl-tRNA(Glu) to glutamate 1-semialdehyde (GSA). This Janthinobacterium sp. (strain Marseille) (Minibacterium massiliensis) protein is Glutamyl-tRNA reductase.